Consider the following 118-residue polypeptide: uncharacterized protein (118 aa).

2 helical membrane-spanning segments follow: residues 7–27 (VIVK…FIIE) and 34–58 (VFVA…AIIF).

It localises to the membrane. This is an uncharacterized protein from Saccharomyces cerevisiae (strain ATCC 204508 / S288c) (Baker's yeast).